The primary structure comprises 184 residues: Holliday junction branch migration complex subunit RuvA (184 aa).

The interval 1-62 is domain I; it reads MIVGLVGEVL…EDSESLYGFV (62 aa). A domain II region spans residues 63-134; sequence DINEKKMFDR…ELGEFDISES (72 aa). A flexible linker region spans residues 134–135; it reads SN. Residues 136–184 form a domain III region; sequence VTSSAFQEASMALQSLGFKKEQIQKALQECTATDTASLVKEALKKIQKL.

Belongs to the RuvA family. As to quaternary structure, homotetramer. Forms an RuvA(8)-RuvB(12)-Holliday junction (HJ) complex. HJ DNA is sandwiched between 2 RuvA tetramers; dsDNA enters through RuvA and exits via RuvB. An RuvB hexamer assembles on each DNA strand where it exits the tetramer. Each RuvB hexamer is contacted by two RuvA subunits (via domain III) on 2 adjacent RuvB subunits; this complex drives branch migration. In the full resolvosome a probable DNA-RuvA(4)-RuvB(12)-RuvC(2) complex forms which resolves the HJ.

It localises to the cytoplasm. In terms of biological role, the RuvA-RuvB-RuvC complex processes Holliday junction (HJ) DNA during genetic recombination and DNA repair, while the RuvA-RuvB complex plays an important role in the rescue of blocked DNA replication forks via replication fork reversal (RFR). RuvA specifically binds to HJ cruciform DNA, conferring on it an open structure. The RuvB hexamer acts as an ATP-dependent pump, pulling dsDNA into and through the RuvAB complex. HJ branch migration allows RuvC to scan DNA until it finds its consensus sequence, where it cleaves and resolves the cruciform DNA. The polypeptide is Holliday junction branch migration complex subunit RuvA (Nitratiruptor sp. (strain SB155-2)).